The sequence spans 281 residues: Probable superoxide dismutase [Fe] (281 aa).

Fe cation-binding residues include H104, H152, D236, and H240.

The protein belongs to the iron/manganese superoxide dismutase family. Requires Fe cation as cofactor.

The catalysed reaction is 2 superoxide + 2 H(+) = H2O2 + O2. In terms of biological role, destroys superoxide anion radicals which are normally produced within the cells and which are toxic to biological systems. In Bacillus subtilis (strain 168), this protein is Probable superoxide dismutase [Fe] (sodF).